We begin with the raw amino-acid sequence, 344 residues long: Phenylalanine--tRNA ligase alpha subunit (344 aa).

Glu-256 provides a ligand contact to Mg(2+).

The protein belongs to the class-II aminoacyl-tRNA synthetase family. Phe-tRNA synthetase alpha subunit type 1 subfamily. As to quaternary structure, tetramer of two alpha and two beta subunits. The cofactor is Mg(2+).

It is found in the cytoplasm. It catalyses the reaction tRNA(Phe) + L-phenylalanine + ATP = L-phenylalanyl-tRNA(Phe) + AMP + diphosphate + H(+). This Shouchella clausii (strain KSM-K16) (Alkalihalobacillus clausii) protein is Phenylalanine--tRNA ligase alpha subunit.